The following is a 465-amino-acid chain: Phosphomannomutase/phosphoglucomutase (465 aa).

The active-site Phosphoserine intermediate is Ser-110. 4 residues coordinate Mg(2+): Ser-110, Asp-244, Asp-246, and Asp-248. Substrate-binding residues include Glu-327, Ser-329, and His-331.

Belongs to the phosphohexose mutase family. As to quaternary structure, monomer. Mg(2+) serves as cofactor.

It catalyses the reaction alpha-D-mannose 1-phosphate = D-mannose 6-phosphate. It carries out the reaction alpha-D-glucose 1-phosphate = alpha-D-glucose 6-phosphate. It participates in nucleotide-sugar biosynthesis; GDP-alpha-D-mannose biosynthesis; alpha-D-mannose 1-phosphate from D-fructose 6-phosphate: step 2/2. Its pathway is bacterial outer membrane biogenesis; lipopolysaccharide biosynthesis. In terms of biological role, the phosphomannomutase activity produces a precursor for alginate polymerization. The alginate layer causes a mucoid phenotype and provides a protective barrier against host immune defenses and antibiotics. Also involved in core-LPS biosynthesis due to its phosphoglucomutase activity. Essential for biofilm production. The chain is Phosphomannomutase/phosphoglucomutase (algC) from Pseudomonas syringae pv. tomato (strain ATCC BAA-871 / DC3000).